The primary structure comprises 48 residues: uncharacterized protein (48 aa).

A helical transmembrane segment spans residues 21-43; the sequence is SIFVSLGVFAVSVAILKSRLGNF.

It is found in the membrane. This is an uncharacterized protein from Schizosaccharomyces pombe (strain 972 / ATCC 24843) (Fission yeast).